Consider the following 162-residue polypeptide: Small ribosomal subunit protein uS13 (162 aa).

Residues 142–162 are disordered; it reads RGQRTKSTGRRGSTVGVSRKK.

It belongs to the universal ribosomal protein uS13 family. In terms of assembly, part of the 30S ribosomal subunit. Forms a loose heterodimer with protein S19. Forms two bridges to the 50S subunit in the 70S ribosome.

Located at the top of the head of the 30S subunit, it contacts several helices of the 16S rRNA. In the 70S ribosome it contacts the 23S rRNA (bridge B1a) and protein L5 of the 50S subunit (bridge B1b), connecting the 2 subunits; these bridges are implicated in subunit movement. In Methanosarcina mazei (strain ATCC BAA-159 / DSM 3647 / Goe1 / Go1 / JCM 11833 / OCM 88) (Methanosarcina frisia), this protein is Small ribosomal subunit protein uS13.